Consider the following 339-residue polypeptide: Methionyl-tRNA formyltransferase (339 aa).

110–113 contributes to the (6S)-5,6,7,8-tetrahydrofolate binding site; sequence SLLP.

It belongs to the Fmt family.

The catalysed reaction is L-methionyl-tRNA(fMet) + (6R)-10-formyltetrahydrofolate = N-formyl-L-methionyl-tRNA(fMet) + (6S)-5,6,7,8-tetrahydrofolate + H(+). Attaches a formyl group to the free amino group of methionyl-tRNA(fMet). The formyl group appears to play a dual role in the initiator identity of N-formylmethionyl-tRNA by promoting its recognition by IF2 and preventing the misappropriation of this tRNA by the elongation apparatus. In Prochlorococcus marinus (strain MIT 9211), this protein is Methionyl-tRNA formyltransferase.